A 395-amino-acid polypeptide reads, in one-letter code: Probable alcohol dehydrogenase EutG (395 aa).

Residues aspartate 57, glycine 116–aspartate 120, threonine 156–threonine 160, lysine 178, and leucine 197–valine 201 each bind NAD(+). Aspartate 212, histidine 216, histidine 281, and histidine 295 together coordinate Fe cation. Residues histidine 295 and aspartate 354 each coordinate NAD(+).

This sequence belongs to the iron-containing alcohol dehydrogenase family. Requires Fe cation as cofactor.

It localises to the bacterial microcompartment. The catalysed reaction is ethanol + NAD(+) = acetaldehyde + NADH + H(+). Its pathway is amine and polyamine degradation; ethanolamine degradation. In terms of biological role, may act on the acetaldehyde produced from the degradation of ethanolamine, producing ethanol. Active on acetaldehyde and isobutyraldehyde in vitro. In vitro works equally well with NADH or NADPH. This Escherichia coli (strain K12) protein is Probable alcohol dehydrogenase EutG (eutG).